Consider the following 336-residue polypeptide: HTH-type transcriptional repressor PurR (336 aa).

The region spanning 2–56 is the HTH lacI-type domain; the sequence is ATIKDVARLAGVSTTTVSHVINKTRFVAETTQEKVMEAVKQLNYAPSAVARSLKC. The segment at residues 4 to 23 is a DNA-binding region (H-T-H motif); the sequence is IKDVARLAGVSTTTVSHVIN. Residues 48–56 mediate DNA binding; sequence SAVARSLKC. Hypoxanthine is bound by residues Phe73, Lys189, Phe220, and Asp274.

Homodimer.

It participates in purine metabolism; purine nucleotide biosynthesis [regulation]. Functionally, is the main repressor of the genes involved in the de novo synthesis of purine nucleotides, regulating purB, purC, purEK, purF, purHD, purL, purMN and guaBA expression. PurR is allosterically activated to bind its cognate DNA by binding the purine corepressors, hypoxanthine or guanine, thereby effecting transcription repression. This chain is HTH-type transcriptional repressor PurR, found in Vibrio cholerae serotype O1 (strain ATCC 39315 / El Tor Inaba N16961).